The primary structure comprises 189 residues: Parkinson disease protein 7 homolog (189 aa).

At alanine 2 the chain carries N-acetylalanine. Residues cysteine 46 and cysteine 53 are each lipidated (S-palmitoyl cysteine). Tyrosine 67 is modified (phosphotyrosine). Cysteine 106 serves as the catalytic Nucleophile. Cysteine 106 carries the cysteine sulfinic acid (-SO2H); alternate modification. The S-palmitoyl cysteine; alternate moiety is linked to residue cysteine 106. The active site involves histidine 126. Lysine 130 participates in a covalent cross-link: Glycyl lysine isopeptide (Lys-Gly) (interchain with G-Cter in SUMO). Residue lysine 148 is modified to N6-acetyllysine. Lysine 182 is subject to N6-succinyllysine.

Belongs to the peptidase C56 family. In terms of assembly, homodimer. Binds EFCAB6/DJBP and PIAS2. Part of a ternary complex containing PARK7, EFCAB6/DJBP and AR. Interacts (via N-terminus) with OTUD7B. Interacts with BBS1, HIPK1, CLCF1 and MTERF. Forms a complex with PINK1 and PRKN. Interacts (via C-terminus) with NCF1; the interaction is enhanced by LPS and modulates NCF1 phosphorylation and membrane translocation. Interacts with NENF. Deglycase activity does not require glutathione as a cofactor, however, glycated glutathione constitutes a PARK7 substrate. serves as cofactor. In terms of processing, sumoylated on Lys-130 by PIAS2 or PIAS4; which is essential for cell-growth promoting activity and transforming activity. Post-translationally, undergoes cleavage of a C-terminal peptide and subsequent activation of protease activity in response to oxidative stress. In terms of tissue distribution, ubiquitous. Detected on epididymal sperm. Highly expressed in testis and prostate. Detected at lower levels in heart, lung, brain, liver, kidney, seminal vesicle, caput and corpus epididymis.

It localises to the cell membrane. It is found in the cytoplasm. Its subcellular location is the membrane raft. The protein resides in the nucleus. The protein localises to the mitochondrion. It localises to the endoplasmic reticulum. The catalysed reaction is N(omega)-(1-hydroxy-2-oxopropyl)-L-arginyl-[protein] + H2O = lactate + L-arginyl-[protein] + H(+). It carries out the reaction N(6)-(1-hydroxy-2-oxopropyl)-L-lysyl-[protein] + H2O = lactate + L-lysyl-[protein] + H(+). It catalyses the reaction S-(1-hydroxy-2-oxopropyl)-L-cysteinyl-[protein] + H2O = lactate + L-cysteinyl-[protein] + H(+). The enzyme catalyses N(omega)-(1-hydroxy-2-oxoethyl)-L-arginyl-[protein] + H2O = L-arginyl-[protein] + glycolate + H(+). The catalysed reaction is N(6)-(1-hydroxy-2-oxoethyl)-L-lysyl-[protein] + H2O = glycolate + L-lysyl-[protein] + H(+). It carries out the reaction S-(1-hydroxy-2-oxoethyl)-L-cysteinyl-[protein] + H2O = glycolate + L-cysteinyl-[protein] + H(+). It catalyses the reaction N(2)-(1-hydroxy-2-oxopropyl)-dGTP + H2O = lactate + dGTP + H(+). The enzyme catalyses N(2)-(1-hydroxy-2-oxopropyl)-GTP + H2O = lactate + GTP + H(+). The catalysed reaction is N(2)-(1-hydroxy-2-oxopropyl)-GDP + H2O = lactate + GDP + H(+). It carries out the reaction N(2)-(1-hydroxy-2-oxopropyl)-GMP + H2O = lactate + GMP + H(+). It catalyses the reaction N(2)-(1-hydroxy-2-oxoethyl)-dGTP + H2O = dGTP + glycolate + H(+). The enzyme catalyses N(2)-(1-hydroxy-2-oxoethyl)-GTP + H2O = glycolate + GTP + H(+). The catalysed reaction is N(2)-(1-hydroxy-2-oxoethyl)-GDP + H2O = glycolate + GDP + H(+). It carries out the reaction N(2)-(1-hydroxy-2-oxoethyl)-GMP + H2O = glycolate + GMP + H(+). It catalyses the reaction an N(2)-(1-hydroxy-2-oxopropyl)-guanosine in RNA + H2O = a guanosine in RNA + lactate + H(+). The enzyme catalyses an N(2)-(1-hydroxy-2-oxopropyl)-2'-deoxyguanosine in DNA + H2O = a 2'-deoxyguanosine in DNA + lactate + H(+). The catalysed reaction is an N(2)-(1-hydroxy-2-oxoethyl)-guanosine in RNA + H2O = a guanosine in RNA + glycolate + H(+). It carries out the reaction an N(2)-(1-hydroxy-2-oxoethyl)-2'-deoxyguanosine in DNA + H2O = a 2'-deoxyguanosine in DNA + glycolate + H(+). Its function is as follows. Protein and nucleotide deglycase that catalyzes the deglycation of the Maillard adducts formed between amino groups of proteins or nucleotides and reactive carbonyl groups of glyoxals. Thus, functions as a protein deglycase that repairs methylglyoxal- and glyoxal-glycated proteins, and releases repaired proteins and lactate or glycolate, respectively. Deglycates cysteine, arginine and lysine residues in proteins, and thus reactivates these proteins by reversing glycation by glyoxals. Acts on early glycation intermediates (hemithioacetals and aminocarbinols), preventing the formation of advanced glycation endproducts (AGE) that cause irreversible damage. Also functions as a nucleotide deglycase able to repair glycated guanine in the free nucleotide pool (GTP, GDP, GMP, dGTP) and in DNA and RNA. Is thus involved in a major nucleotide repair system named guanine glycation repair (GG repair), dedicated to reversing methylglyoxal and glyoxal damage via nucleotide sanitization and direct nucleic acid repair. Also displays an apparent glyoxalase activity that in fact reflects its deglycase activity. Plays an important role in cell protection against oxidative stress and cell death acting as oxidative stress sensor and redox-sensitive chaperone and protease; functions probably related to its primary function. It is involved in neuroprotective mechanisms like the stabilization of NFE2L2 and PINK1 proteins, male fertility as a positive regulator of androgen signaling pathway as well as cell growth and transformation through, for instance, the modulation of NF-kappa-B signaling pathway. Eliminates hydrogen peroxide and protects cells against hydrogen peroxide-induced cell death. Required for correct mitochondrial morphology and function as well as for autophagy of dysfunctional mitochondria. Plays a role in regulating expression or stability of the mitochondrial uncoupling proteins SLC25A14 and SLC25A27 in dopaminergic neurons of the substantia nigra pars compacta and attenuates the oxidative stress induced by calcium entry into the neurons via L-type channels during pacemaking. Regulates astrocyte inflammatory responses, may modulate lipid rafts-dependent endocytosis in astrocytes and neuronal cells. In pancreatic islets, involved in the maintenance of mitochondrial reactive oxygen species (ROS) levels and glucose homeostasis in an age- and diet dependent manner. Protects pancreatic beta cells from cell death induced by inflammatory and cytotoxic setting. Binds to a number of mRNAs containing multiple copies of GG or CC motifs and partially inhibits their translation but dissociates following oxidative stress. Metal-binding protein able to bind copper as well as toxic mercury ions, enhances the cell protection mechanism against induced metal toxicity. In macrophages, interacts with the NADPH oxidase subunit NCF1 to direct NADPH oxidase-dependent ROS production, and protects against sepsis. The polypeptide is Parkinson disease protein 7 homolog (Rattus norvegicus (Rat)).